We begin with the raw amino-acid sequence, 545 residues long: Chaperonin GroEL (545 aa).

ATP contacts are provided by residues 30–33 (TLGP), Lys-51, 87–91 (DGTTT), Gly-415, 479–481 (NAA), and Asp-495.

This sequence belongs to the chaperonin (HSP60) family. As to quaternary structure, forms a cylinder of 14 subunits composed of two heptameric rings stacked back-to-back. Interacts with the co-chaperonin GroES.

The protein resides in the cytoplasm. The catalysed reaction is ATP + H2O + a folded polypeptide = ADP + phosphate + an unfolded polypeptide.. Functionally, together with its co-chaperonin GroES, plays an essential role in assisting protein folding. The GroEL-GroES system forms a nano-cage that allows encapsulation of the non-native substrate proteins and provides a physical environment optimized to promote and accelerate protein folding. This chain is Chaperonin GroEL, found in Tolumonas auensis (strain DSM 9187 / NBRC 110442 / TA 4).